Reading from the N-terminus, the 160-residue chain is Cyclic pyranopterin monophosphate synthase (160 aa).

Substrate-binding positions include 77–79 (LCH) and 114–115 (ME). Asp129 is an active-site residue.

Belongs to the MoaC family. In terms of assembly, homohexamer; trimer of dimers.

It catalyses the reaction (8S)-3',8-cyclo-7,8-dihydroguanosine 5'-triphosphate = cyclic pyranopterin phosphate + diphosphate. Its pathway is cofactor biosynthesis; molybdopterin biosynthesis. In terms of biological role, catalyzes the conversion of (8S)-3',8-cyclo-7,8-dihydroguanosine 5'-triphosphate to cyclic pyranopterin monophosphate (cPMP). The polypeptide is Cyclic pyranopterin monophosphate synthase (Alcanivorax borkumensis (strain ATCC 700651 / DSM 11573 / NCIMB 13689 / SK2)).